The following is a 360-amino-acid chain: Peptide chain release factor 1 (360 aa).

Q235 is subject to N5-methylglutamine.

Belongs to the prokaryotic/mitochondrial release factor family. In terms of processing, methylated by PrmC. Methylation increases the termination efficiency of RF1.

It is found in the cytoplasm. Its function is as follows. Peptide chain release factor 1 directs the termination of translation in response to the peptide chain termination codons UAG and UAA. This is Peptide chain release factor 1 from Burkholderia mallei (strain NCTC 10247).